The primary structure comprises 279 residues: Phosphate-binding protein PstS (279 aa).

A signal peptide spans 1 to 18; it reads MKKVIILIFMLSTSLLYN. Cys-19 carries the N-palmitoyl cysteine lipid modification. Cys-19 carries S-diacylglycerol cysteine lipidation. Phosphate is bound by residues 33–35, Ser-63, and 151–153; these read STT and SGS.

It belongs to the PstS family. Monomer (in vitro). The complex is composed of two ATP-binding proteins (PstB), two transmembrane proteins (PstC and PstA) and a solute-binding protein (PstS).

The protein localises to the cell membrane. Its function is as follows. Binds inorganic phosphate with a Kd of 1.2 uM. Part of the ABC transporter complex PstSACB involved in phosphate import. In Borreliella burgdorferi (strain ATCC 35210 / DSM 4680 / CIP 102532 / B31) (Borrelia burgdorferi), this protein is Phosphate-binding protein PstS.